Here is a 237-residue protein sequence, read N- to C-terminus: MAAPRRGTQKSDSDSSDEDLDRFREAAWVPPGAHQKVSDEQNEKIALPSLRVRPDCHEHDGNELQTTPEFRSHVAKKLAAILDSSIREVSQNEAVHISKAGNGDSEDEGFRLFRTSLPGEAGIVTSTIPRRKLASSSSEDSEEEQQRCREAAVSACDILRHSTLQQEPQSTPSNVCDNQPPKKKRKKKKKDRGDTSQINSVEETMHIEPGKNELQAKRKKKKKQKLEMAHCDELGNE.

Disordered stretches follow at residues M1 to F23, L50 to E69, and I97 to E237. Positions V52–N62 are enriched in basic and acidic residues. Residues S162 to D177 are compositionally biased toward polar residues. Residues P181–K190 are compositionally biased toward basic residues. Positions K182–K190 match the Nucleolar localization signal (NLS1) motif. 2 stretches are compositionally biased toward basic and acidic residues: residues E203–A216 and K225–E237. The Nucleolar localization signal (NLS2) motif lies at K217–K225.

Belongs to the CUSTOS family. In terms of assembly, interacts (via NLS1 and NLS2) with dvl2; the interaction is negatively regulated by Wnt stimulation. Interacts with csnk1a1. Interacts with ctnnb1; the interaction is positively regulated by Wnt stimulation. Phosphorylated by ck1/csnk1a1.

It is found in the nucleus envelope. In terms of biological role, essential for Spemann-Mangold organizer formation and subsequent anterior head development in the embryo. Inhibits canonical Wnt signaling pathway by antagonizing nuclear import of beta-catenin (ctnnb1) during embryogenesis. This Xenopus laevis (African clawed frog) protein is Protein CUSTOS.